We begin with the raw amino-acid sequence, 342 residues long: Trans-3-hydroxy-L-proline dehydratase (342 aa).

The Proton acceptor role is filled by Ser-90. Substrate is bound by residues 91-92, Asp-252, and 257-258; these read GS and GT.

The protein belongs to the proline racemase family.

The catalysed reaction is trans-3-hydroxy-L-proline = 1-pyrroline-2-carboxylate + H2O. The enzyme catalyses trans-4-hydroxy-L-proline = cis-4-hydroxy-D-proline. In terms of biological role, catalyzes the dehydration of trans-3-hydroxy-L-proline (t3LHyp) to Delta(1)-pyrroline-2-carboxylate (Pyr2C). Can also catalyze the epimerization of trans-4-hydroxy-L-proline (t4LHyp) to cis-4-hydroxy-D-proline (c4DHyp), albeit with 30-fold lower efficiency. Is likely involved in both degradation pathways that convert t3LHyp to L-proline and t4LHyp to alpha-ketoglutarate, which would allow A.tumefaciens to grow on t3LHyp or t4LHyp as a sole carbon source. Displays no proline racemase activity. This chain is Trans-3-hydroxy-L-proline dehydratase, found in Agrobacterium fabrum (strain C58 / ATCC 33970) (Agrobacterium tumefaciens (strain C58)).